The primary structure comprises 215 residues: Adenylate kinase (215 aa).

Residue 10-15 (GAGKGT) participates in ATP binding. The interval 30–59 (STGDILRDAVSKGTELGKMAKAIMDRGELV) is NMP. Residues T31, R36, 57 to 59 (ELV), 82 to 85 (GYPR), and Q89 each bind AMP. An LID region spans residues 123 to 160 (NRRVCPNCGKVYNLITLQPKEDEKCDVCGTKLIQRDDD). R124 contributes to the ATP binding site. Zn(2+) is bound by residues C127 and C130. 133-134 (VY) serves as a coordination point for ATP. Residues C147 and C150 each contribute to the Zn(2+) site. Positions 157 and 168 each coordinate AMP. Residue Q196 participates in ATP binding.

Belongs to the adenylate kinase family. In terms of assembly, monomer.

It localises to the cytoplasm. It catalyses the reaction AMP + ATP = 2 ADP. Its pathway is purine metabolism; AMP biosynthesis via salvage pathway; AMP from ADP: step 1/1. In terms of biological role, catalyzes the reversible transfer of the terminal phosphate group between ATP and AMP. Plays an important role in cellular energy homeostasis and in adenine nucleotide metabolism. In Petrotoga mobilis (strain DSM 10674 / SJ95), this protein is Adenylate kinase.